A 387-amino-acid polypeptide reads, in one-letter code: Succinate--CoA ligase [ADP-forming] subunit beta (387 aa).

In terms of domain architecture, ATP-grasp spans 9–244; the sequence is KAIFADNGIP…ITEENPAERE (236 aa). Residues Lys-46, 53 to 55, Glu-99, Ala-102, and Glu-107 each bind ATP; that span reads GRG. Residues Asn-199 and Asp-213 each contribute to the Mg(2+) site. Residues Asn-264 and 321 to 323 contribute to the substrate site; that span reads GIV.

It belongs to the succinate/malate CoA ligase beta subunit family. Heterotetramer of two alpha and two beta subunits. The cofactor is Mg(2+).

The catalysed reaction is succinate + ATP + CoA = succinyl-CoA + ADP + phosphate. It catalyses the reaction GTP + succinate + CoA = succinyl-CoA + GDP + phosphate. It participates in carbohydrate metabolism; tricarboxylic acid cycle; succinate from succinyl-CoA (ligase route): step 1/1. In terms of biological role, succinyl-CoA synthetase functions in the citric acid cycle (TCA), coupling the hydrolysis of succinyl-CoA to the synthesis of either ATP or GTP and thus represents the only step of substrate-level phosphorylation in the TCA. The beta subunit provides nucleotide specificity of the enzyme and binds the substrate succinate, while the binding sites for coenzyme A and phosphate are found in the alpha subunit. This chain is Succinate--CoA ligase [ADP-forming] subunit beta, found in Campylobacter jejuni subsp. jejuni serotype O:6 (strain 81116 / NCTC 11828).